We begin with the raw amino-acid sequence, 323 residues long: tRNA U34 carboxymethyltransferase (323 aa).

Carboxy-S-adenosyl-L-methionine contacts are provided by residues K91, W105, K110, G130, 181-182 (IE), M196, Y200, and R315.

It belongs to the class I-like SAM-binding methyltransferase superfamily. CmoB family. Homotetramer.

The enzyme catalyses carboxy-S-adenosyl-L-methionine + 5-hydroxyuridine(34) in tRNA = 5-carboxymethoxyuridine(34) in tRNA + S-adenosyl-L-homocysteine + H(+). In terms of biological role, catalyzes carboxymethyl transfer from carboxy-S-adenosyl-L-methionine (Cx-SAM) to 5-hydroxyuridine (ho5U) to form 5-carboxymethoxyuridine (cmo5U) at position 34 in tRNAs. The sequence is that of tRNA U34 carboxymethyltransferase from Yersinia pestis bv. Antiqua (strain Antiqua).